Here is a 278-residue protein sequence, read N- to C-terminus: Expansin-B17 (278 aa).

The first 26 residues, 1-26 (MAAASSRSFSLCVLLLLLLLAPPISA), serve as a signal peptide directing secretion. The Expansin-like EG45 domain occupies 66–176 (GGACGYGSLV…RRTACKYGGK (111 aa)). 3 cysteine pairs are disulfide-bonded: cysteine 69/cysteine 98, cysteine 101/cysteine 171, and cysteine 106/cysteine 112. The Expansin-like CBD domain occupies 189–270 (FWLSLLVEFE…NWKPTATYTS (82 aa)).

This sequence belongs to the expansin family. Expansin B subfamily.

Its subcellular location is the secreted. It is found in the cell wall. The protein resides in the membrane. In terms of biological role, may cause loosening and extension of plant cell walls by disrupting non-covalent bonding between cellulose microfibrils and matrix glucans. No enzymatic activity has been found. May be required for rapid internodal elongation in deepwater rice during submergence. The protein is Expansin-B17 (EXPB17) of Oryza sativa subsp. japonica (Rice).